Reading from the N-terminus, the 121-residue chain is Large-conductance mechanosensitive channel (121 aa).

A run of 2 helical transmembrane segments spans residues 14-34 (VLDLAVGVIIGAAFTALVKSL) and 67-87 (GAFLNDVINFVITAFVIFVLI).

The protein belongs to the MscL family. Homopentamer.

It is found in the cell membrane. In terms of biological role, channel that opens in response to stretch forces in the membrane lipid bilayer. May participate in the regulation of osmotic pressure changes within the cell. The polypeptide is Large-conductance mechanosensitive channel (Lactococcus lactis subsp. cremoris (strain SK11)).